The primary structure comprises 126 residues: Fatty acid-binding protein, liver (126 aa).

Residue alanine 2 is modified to N-acetylalanine.

The protein belongs to the calycin superfamily. Fatty-acid binding protein (FABP) family. As to expression, liver.

It is found in the cytoplasm. Its function is as follows. Binds free fatty acids and their coenzyme A derivatives, bilirubin, and some other small molecules in the cytoplasm. May be involved in intracellular lipid transport this L-FABP binds only one fatty acid/molecule. Has more affinity for trans-parinaric acid than for cis-parinaric acid. In Rhamdia sapo (South American catfish), this protein is Fatty acid-binding protein, liver (fabp1).